Here is a 362-residue protein sequence, read N- to C-terminus: Phosphoserine aminotransferase (362 aa).

2 residues coordinate L-glutamate: Ser9 and Arg42. Residues 76–77 (GR), Trp102, Thr153, Asp174, and Gln197 contribute to the pyridoxal 5'-phosphate site. At Lys198 the chain carries N6-(pyridoxal phosphate)lysine. Position 239–240 (239–240 (NT)) interacts with pyridoxal 5'-phosphate.

This sequence belongs to the class-V pyridoxal-phosphate-dependent aminotransferase family. SerC subfamily. Homodimer. Pyridoxal 5'-phosphate is required as a cofactor.

The protein resides in the cytoplasm. The catalysed reaction is O-phospho-L-serine + 2-oxoglutarate = 3-phosphooxypyruvate + L-glutamate. It catalyses the reaction 4-(phosphooxy)-L-threonine + 2-oxoglutarate = (R)-3-hydroxy-2-oxo-4-phosphooxybutanoate + L-glutamate. The protein operates within amino-acid biosynthesis; L-serine biosynthesis; L-serine from 3-phospho-D-glycerate: step 2/3. Its pathway is cofactor biosynthesis; pyridoxine 5'-phosphate biosynthesis; pyridoxine 5'-phosphate from D-erythrose 4-phosphate: step 3/5. Catalyzes the reversible conversion of 3-phosphohydroxypyruvate to phosphoserine and of 3-hydroxy-2-oxo-4-phosphonooxybutanoate to phosphohydroxythreonine. This is Phosphoserine aminotransferase from Shigella dysenteriae serotype 1 (strain Sd197).